A 562-amino-acid chain; its full sequence is Oxygen-dependent choline dehydrogenase (562 aa).

4 to 33 (DYIIIGAGSAGNVLATRLTEDPNTTVLLLE) lines the FAD pocket. The active-site Proton acceptor is histidine 473.

The protein belongs to the GMC oxidoreductase family. FAD serves as cofactor.

It catalyses the reaction choline + A = betaine aldehyde + AH2. The enzyme catalyses betaine aldehyde + NAD(+) + H2O = glycine betaine + NADH + 2 H(+). It functions in the pathway amine and polyamine biosynthesis; betaine biosynthesis via choline pathway; betaine aldehyde from choline (cytochrome c reductase route): step 1/1. Involved in the biosynthesis of the osmoprotectant glycine betaine. Catalyzes the oxidation of choline to betaine aldehyde and betaine aldehyde to glycine betaine at the same rate. The protein is Oxygen-dependent choline dehydrogenase of Escherichia coli (strain SMS-3-5 / SECEC).